The sequence spans 351 residues: Cardiolipin synthase (CMP-forming) (351 aa).

The tract at residues 74–120 (PAPQLSASHQHQAQQQQQQTKQPQQPYDPQQDQVPSTSTASSSKPAA) is disordered. Residues 76–120 (PQLSASHQHQAQQQQQQTKQPQQPYDPQQDQVPSTSTASSSKPAA) show a composition bias toward low complexity. 5 helical membrane passes run 139–159 (PLIG…ALAV), 191–211 (VLIG…GWVA), 251–271 (AAAA…GGGG), 280–300 (PLLI…GYLL), and 321–341 (LIMG…LAYG).

This sequence belongs to the CDP-alcohol phosphatidyltransferase class-I family. Mn(2+) is required as a cofactor.

Its subcellular location is the mitochondrion inner membrane. The catalysed reaction is a CDP-1,2-diacyl-sn-glycerol + a 1,2-diacyl-sn-glycero-3-phospho-(1'-sn-glycerol) = a cardiolipin + CMP + H(+). In terms of biological role, catalyzes the synthesis of cardiolipin (CL) (diphosphatidylglycerol) by specifically transferring a phosphatidyl group from CDP-diacylglycerol to phosphatidylglycerol (PG). CL is a key phospholipid in mitochondrial membranes and plays important roles in maintaining the functional integrity and dynamics of mitochondria under both optimal and stress conditions. Cannot catalyze the phosphatidyl group transfer from one PG molecule to another to form CL. This chain is Cardiolipin synthase (CMP-forming), found in Chlamydomonas reinhardtii (Chlamydomonas smithii).